Consider the following 926-residue polypeptide: Isoleucine--tRNA ligase (926 aa).

A 'HIGH' region motif is present at residues 57-67; sequence PYANGNIHMGH. L-isoleucyl-5'-AMP is bound at residue Glu-555. The 'KMSKS' region motif lies at 596–600; it reads KMSKS. Lys-599 is an ATP binding site. Positions 897, 900, 914, and 917 each coordinate Zn(2+).

This sequence belongs to the class-I aminoacyl-tRNA synthetase family. IleS type 1 subfamily. Monomer. The cofactor is Zn(2+).

It is found in the cytoplasm. The catalysed reaction is tRNA(Ile) + L-isoleucine + ATP = L-isoleucyl-tRNA(Ile) + AMP + diphosphate. Functionally, catalyzes the attachment of isoleucine to tRNA(Ile). As IleRS can inadvertently accommodate and process structurally similar amino acids such as valine, to avoid such errors it has two additional distinct tRNA(Ile)-dependent editing activities. One activity is designated as 'pretransfer' editing and involves the hydrolysis of activated Val-AMP. The other activity is designated 'posttransfer' editing and involves deacylation of mischarged Val-tRNA(Ile). The polypeptide is Isoleucine--tRNA ligase (Natranaerobius thermophilus (strain ATCC BAA-1301 / DSM 18059 / JW/NM-WN-LF)).